Consider the following 218-residue polypeptide: Hypoxanthine-guanine phosphoribosyltransferase (218 aa).

Residues Lys-69, 134-142 (EDIIDTGKT), Lys-166, 186-188 (KFV), and Asp-194 each bind GMP. The active-site Proton acceptor is Asp-138. Residue Asp-194 coordinates Mg(2+).

Belongs to the purine/pyrimidine phosphoribosyltransferase family. Homotetramer. The cofactor is Mg(2+).

The protein resides in the cytoplasm. The enzyme catalyses IMP + diphosphate = hypoxanthine + 5-phospho-alpha-D-ribose 1-diphosphate. The catalysed reaction is GMP + diphosphate = guanine + 5-phospho-alpha-D-ribose 1-diphosphate. Its pathway is purine metabolism; IMP biosynthesis via salvage pathway; IMP from hypoxanthine: step 1/1. Functionally, converts guanine to guanosine monophosphate, and hypoxanthine to inosine monophosphate. Transfers the 5-phosphoribosyl group from 5-phosphoribosylpyrophosphate onto the purine. Plays a central role in the generation of purine nucleotides through the purine salvage pathway. The sequence is that of Hypoxanthine-guanine phosphoribosyltransferase (HPRT1) from Gallus gallus (Chicken).